A 101-amino-acid polypeptide reads, in one-letter code: Interleukin-8 (101 aa).

Positions Met-1 to Ala-22 are cleaved as a signal peptide. Cystine bridges form between Cys-34/Cys-61 and Cys-36/Cys-77.

This sequence belongs to the intercrine alpha (chemokine CxC) family. As to quaternary structure, homodimer. Interacts with TNFAIP6 (via Link domain); this interaction interferes with chemokine binding to glycosaminoglycans.

The protein resides in the secreted. Its function is as follows. Chemotactic factor that mediates inflammatory response by attracting neutrophils, basophils, and T-cells to clear pathogens and protect the host from infection. Also plays an important role in neutrophil activation. Released in response to an inflammatory stimulus, exerts its effect by binding to the G-protein-coupled receptors CXCR1 and CXCR2, primarily found in neutrophils, monocytes and endothelial cells. G-protein heterotrimer (alpha, beta, gamma subunits) constitutively binds to CXCR1/CXCR2 receptor and activation by IL8 leads to beta and gamma subunits release from Galpha (GNAI2 in neutrophils) and activation of several downstream signaling pathways including PI3K and MAPK pathways. The chain is Interleukin-8 (CXCL8) from Bos taurus (Bovine).